A 549-amino-acid chain; its full sequence is ATP synthase subunit alpha (549 aa).

172 to 179 (GDRKTGKT) contacts ATP.

The protein belongs to the ATPase alpha/beta chains family. F-type ATPases have 2 components, CF(1) - the catalytic core - and CF(0) - the membrane proton channel. CF(1) has five subunits: alpha(3), beta(3), gamma(1), delta(1), epsilon(1). CF(0) has three main subunits: a(1), b(2) and c(9-12). The alpha and beta chains form an alternating ring which encloses part of the gamma chain. CF(1) is attached to CF(0) by a central stalk formed by the gamma and epsilon chains, while a peripheral stalk is formed by the delta and b chains.

Its subcellular location is the cell membrane. The enzyme catalyses ATP + H2O + 4 H(+)(in) = ADP + phosphate + 5 H(+)(out). Functionally, produces ATP from ADP in the presence of a proton gradient across the membrane. The alpha chain is a regulatory subunit. This Mycobacterium tuberculosis (strain CDC 1551 / Oshkosh) protein is ATP synthase subunit alpha.